We begin with the raw amino-acid sequence, 317 residues long: Ribosomal RNA small subunit methyltransferase H (317 aa).

Residues 32 to 34, D51, F78, D99, and Q106 each bind S-adenosyl-L-methionine; that span reads GGH.

This sequence belongs to the methyltransferase superfamily. RsmH family.

The protein localises to the cytoplasm. The enzyme catalyses cytidine(1402) in 16S rRNA + S-adenosyl-L-methionine = N(4)-methylcytidine(1402) in 16S rRNA + S-adenosyl-L-homocysteine + H(+). In terms of biological role, specifically methylates the N4 position of cytidine in position 1402 (C1402) of 16S rRNA. This chain is Ribosomal RNA small subunit methyltransferase H, found in Helicobacter hepaticus (strain ATCC 51449 / 3B1).